The following is a 98-amino-acid chain: Alpha-elicitin MGM-alpha (98 aa).

Cystine bridges form between Cys3/Cys71, Cys27/Cys56, and Cys51/Cys95.

This sequence belongs to the elicitin family.

It is found in the secreted. Its function is as follows. Induces local and distal defense responses (incompatible hypersensitive reaction) in plants from the solanaceae and cruciferae families. Elicits leaf necrosis and causes the accumulation of pathogenesis-related proteins. Might interact with the lipidic molecules of the plasma membrane. This chain is Alpha-elicitin MGM-alpha, found in Phytophthora megasperma (Potato pink rot fungus).